The sequence spans 265 residues: Glutamate racemase (265 aa).

Residues 7 to 8 (DS) and 39 to 40 (YG) contribute to the substrate site. The active-site Proton donor/acceptor is Cys-70. 71–72 (NT) contacts substrate. Cys-177 (proton donor/acceptor) is an active-site residue.

Belongs to the aspartate/glutamate racemases family.

The enzyme catalyses L-glutamate = D-glutamate. It functions in the pathway cell wall biogenesis; peptidoglycan biosynthesis. In terms of biological role, provides the (R)-glutamate required for cell wall biosynthesis. This Prochlorococcus marinus (strain NATL2A) protein is Glutamate racemase.